The following is a 354-amino-acid chain: Protein-arginine kinase (354 aa).

One can recognise a Phosphagen kinase C-terminal domain in the interval 24–254 (IVLSSRIRLA…QQIIQQEKLA (231 aa)). Residues 27-31 (SSRIR), H92, R125, 176-180 (RASVM), and 207-212 (RGIYGE) contribute to the ATP site. The RDXXRA motif of the pArg binding pocket involved in allosteric regulation signature appears at 337-342 (RDYRRA).

It belongs to the ATP:guanido phosphotransferase family.

The catalysed reaction is L-arginyl-[protein] + ATP = N(omega)-phospho-L-arginyl-[protein] + ADP + H(+). Its activity is regulated as follows. Appears to be allosterically activated by the binding of pArg-containing polypeptides to the pArg-binding pocket localized in the C-terminal domain of McsB. In terms of biological role, catalyzes the specific phosphorylation of arginine residues in a large number of proteins. Is part of the bacterial stress response system. Protein arginine phosphorylation has a physiologically important role and is involved in the regulation of many critical cellular processes, such as protein homeostasis, motility, competence, and stringent and stress responses, by regulating gene expression and protein activity. This Bacillus cereus (strain B4264) protein is Protein-arginine kinase.